Here is a 609-residue protein sequence, read N- to C-terminus: Chloride channel CLIC-like protein 1 (609 aa).

The first 25 residues, 1-25 (MKLSSSSSFGLCILVVFFCFVVIES), serve as a signal peptide directing secretion. The next 3 membrane-spanning stretches (helical) occupy residues 212 to 235 (VSLIVLIIVAIICTQLWSVVSWFV), 241 to 260 (FAVSFFISLIWNWFHLYMLA), and 358 to 380 (VTLQIPVLIIIILAILIFVYGSA). The interval 398-553 (EQPPPAVGQR…PSSIDVKTVG (156 aa)) is disordered. Composition is skewed to basic and acidic residues over residues 454-474 (ENREEDRSMDIRQEFSTKRTP) and 507-537 (EEVKVEEKEKKESFSVDNKEQKETKSPDRSE). Residues 538–547 (PITSEPPSSI) are compositionally biased toward low complexity.

This sequence belongs to the chloride channel MCLC family. In terms of tissue distribution, expressed in the hindbrain, swim bladder and the eye at 1 day post fertilization (dpf) with increased expression at 3 dpf. At 3 dpf, most prominent expression in the retina, with strong expression in the ganglion cell layer, outer nuclear layer and the retinal pigmented epithelium.

The protein resides in the endoplasmic reticulum membrane. It is found in the golgi apparatus membrane. The protein localises to the nucleus membrane. Functionally, seems to act as a chloride ion channel. Plays a role in retina development. The chain is Chloride channel CLIC-like protein 1 from Danio rerio (Zebrafish).